The chain runs to 132 residues: Small ribosomal subunit protein uS8 (132 aa).

Belongs to the universal ribosomal protein uS8 family. As to quaternary structure, part of the 30S ribosomal subunit. Contacts proteins S5 and S12.

Its function is as follows. One of the primary rRNA binding proteins, it binds directly to 16S rRNA central domain where it helps coordinate assembly of the platform of the 30S subunit. The protein is Small ribosomal subunit protein uS8 of Psychrobacter arcticus (strain DSM 17307 / VKM B-2377 / 273-4).